The primary structure comprises 280 residues: 2,3,4,5-tetrahydropyridine-2,6-dicarboxylate N-succinyltransferase (280 aa).

It belongs to the transferase hexapeptide repeat family.

Its subcellular location is the cytoplasm. The enzyme catalyses (S)-2,3,4,5-tetrahydrodipicolinate + succinyl-CoA + H2O = (S)-2-succinylamino-6-oxoheptanedioate + CoA. Its pathway is amino-acid biosynthesis; L-lysine biosynthesis via DAP pathway; LL-2,6-diaminopimelate from (S)-tetrahydrodipicolinate (succinylase route): step 1/3. This is 2,3,4,5-tetrahydropyridine-2,6-dicarboxylate N-succinyltransferase from Methylorubrum extorquens (strain PA1) (Methylobacterium extorquens).